The following is a 185-amino-acid chain: Ribose 1,5-bisphosphate phosphokinase PhnN (185 aa).

10-17 provides a ligand contact to ATP; it reads GPSGSGKD.

This sequence belongs to the ribose 1,5-bisphosphokinase family.

It catalyses the reaction alpha-D-ribose 1,5-bisphosphate + ATP = 5-phospho-alpha-D-ribose 1-diphosphate + ADP. It functions in the pathway metabolic intermediate biosynthesis; 5-phospho-alpha-D-ribose 1-diphosphate biosynthesis; 5-phospho-alpha-D-ribose 1-diphosphate from D-ribose 5-phosphate (route II): step 3/3. Functionally, catalyzes the phosphorylation of ribose 1,5-bisphosphate to 5-phospho-D-ribosyl alpha-1-diphosphate (PRPP). This Shigella dysenteriae serotype 1 (strain Sd197) protein is Ribose 1,5-bisphosphate phosphokinase PhnN.